The chain runs to 1318 residues: Uromodulin-like 1 (1318 aa).

An N-terminal signal peptide occupies residues 1-21 (MLRTSGLALLALVSAVGPSQA). Topologically, residues 22-1272 (SGFTEKGLSL…HAEAGLGAGY (1251 aa)) are extracellular. In terms of domain architecture, EMI spans 33 to 106 (GYQLCSHRVT…YEQLGLYCVL (74 aa)). Intrachain disulfides connect Cys37-Cys94, Cys61-Cys70, and Cys93-Cys104. Asn89 carries an N-linked (GlcNAc...) asparagine glycan. Asn109 carries N-linked (GlcNAc...) asparagine glycosylation. The 45-residue stretch at 114–158 (FTSRPGACPAEGPEPSTSPCSLDIDCPGLEKCCPWSGGRYCMAPA) folds into the WAP domain. An N-linked (GlcNAc...) asparagine glycan is attached at Asn172. Residues 264-313 (DVNECFYEELNACSGRELCANLEGSYWCVCHQEAPATSPRKLNLEWEDCP) form the EGF-like 1; calcium-binding domain. The region spanning 314–398 (PVSDYVVLNV…TTLTIKTNAQ (85 aa)) is the Fibronectin type-III 1 domain. N-linked (GlcNAc...) asparagine glycans are attached at residues Asn322, Asn335, and Asn417. Residues 396-510 (NAQVFEVTIK…QGTRVQDWDE (115 aa)) enclose the SEA 1 domain. One can recognise an EGF-like 2; calcium-binding domain in the interval 507–552 (DWDECVDSAEHDCSPAAWCINLEGSYTCQCRTTRDATPSRAGRACE). Intrachain disulfides connect Cys511/Cys525, Cys519/Cys534, and Cys536/Cys551. Asn585 carries N-linked (GlcNAc...) asparagine glycosylation. Residues 593-655 (GYPQGTPAAG…PSPTEDPTGH (63 aa)) are disordered. One can recognise a Fibronectin type-III 2 domain in the interval 702–791 (VPVSIGRIMV…HLKVRTAARK (90 aa)). N-linked (GlcNAc...) asparagine glycosylation occurs at Asn713. The SEA 2 domain maps to 788–900 (AARKLIGKVR…GDTFIQDYDE (113 aa)). The EGF-like 3; calcium-binding domain occupies 897-938 (DYDECERKEDDCVPGTSCRNTLGSFTCSCEGGAPDFPVEYSE). Intrachain disulfides connect Cys901–Cys914 and Cys908–Cys923. A disordered region spans residues 938–957 (ERPCEGDSPGNETWATSPER). N-linked (GlcNAc...) asparagine glycans are attached at residues Asn984 and Asn1050. Residues 992 to 1235 (LCEIEKVVVA…ATCKINCNNF (244 aa)) form the ZP domain. Residues Cys1157 and Cys1215 are joined by a disulfide bond. The chain crosses the membrane as a helical span at residues 1273–1293 (VVLIVVAIFVLVAGTATLLIV). The Cytoplasmic portion of the chain corresponds to 1294–1318 (RYQRMNGRYNFKIQSNNFSYQVFYE).

Isoform 4 is expressed at low level in kidney, testis and fetal thymus. Isoform 3 is expressed at low level in prostate, testis and fetal thymus.

The protein resides in the cell membrane. It is found in the cytoplasm. The sequence is that of Uromodulin-like 1 (UMODL1) from Homo sapiens (Human).